Consider the following 754-residue polypeptide: MESLFPNKGEIIRELLKDPLILKNDSKRSNGSELELDSSDLLQREAILANELNILDNLKTFLNLIKEVKTNLNILELENCYYSLQSLRKKMRNNAAYLKQSFNFQQSISTYVDTLHLELVSTLYKILTNGFWKITENSIQFTPTVEWGKDKVHIEYDTFMDFVAQQYFPKGSLDNQAWFILDMTSADSQEQVRAKLNTIMKEYMNLSRIVSMIKNSIFISGKEISYENEKNILVFSKSSSHGQHCVSTVLTSFEAVCDFMLDGLAFRDRKTLSYELGPLFNTEFTKFVKNNASIILESLDSPLKNLVSVINNKLTRLVAKSEVTNWTHSGKEIQDLLMNKQLYYNLLLDKVLESHISEIRSIFEDPKKSWQNLEVVELTTSNTNTMSEKIGKNDSDVQNEKELHNAVSKDDDWNWEVEDDDADAWGDEIDVNIDDEEEKTNQEKEKEPEEEENAWDEAWAIDENIDDASLENGKEHLKAHDVGSLDKDHIEVTQLPKLFLAISQNFKSSFADSHVDEQYFAYKYNLLQTSYMAMCTANFSHNWCQLYVDMRYLIERDEKLYRIKELTRNLLETKLNMKYRIVCQLIRHQLTEFRENERNPSWDATIEKLLPYILKEIVRPLQKIRGEEGSRYLLSFLNFLYNDCVTKEILKWQIISEVNSENLGELVSLLVNNTDIQLLAKEPSYKKMREKFATMGKFLPLHLKEIMEMFYNGDFYLFATDELIQWIELLFADTPLRRNAIDDIYEIRGTALDD.

The interval Met1 to Met200 is interaction with TIP20. The interval Ala406–Thr440 is interaction with RET1. The interaction with RET2 stretch occupies residues Ala406–Trp459. The segment covering Trp425–Glu438 has biased composition (acidic residues). Positions Trp425 to Ala454 are disordered.

In terms of assembly, component of a peripheral membrane protein complex consisting of DSL1, SEC39/DSL3 and TIP20. Bound to a SNARE complex consisting of UFE1, USE1, SEC20 and SEC22 or YKT6 through direct interaction of TIP20 with SEC20. Binds the coatomer complex through direct interaction with RET2/COPD and RET1/COPA. Binds TIP20 and SEC39/DSL3.

The protein resides in the endoplasmic reticulum membrane. Required for protein transport between the Golgi and the endoplasmic reticulum. May tether coatomer-coated retrograde transport vesicles to the ER membrane through interaction with coatomer as well as the SNARE complex. May contribute to the stabilization of the SNARE complex. The chain is Protein transport protein DSL1 (DSL1) from Saccharomyces cerevisiae (strain ATCC 204508 / S288c) (Baker's yeast).